The following is a 385-amino-acid chain: Methylthioribose-1-phosphate isomerase (385 aa).

The Proton donor role is filled by Asp256.

The protein belongs to the eIF-2B alpha/beta/delta subunits family. MtnA subfamily.

Its subcellular location is the cytoplasm. The protein localises to the nucleus. It carries out the reaction 5-(methylsulfanyl)-alpha-D-ribose 1-phosphate = 5-(methylsulfanyl)-D-ribulose 1-phosphate. It participates in amino-acid biosynthesis; L-methionine biosynthesis via salvage pathway; L-methionine from S-methyl-5-thio-alpha-D-ribose 1-phosphate: step 1/6. In terms of biological role, catalyzes the interconversion of methylthioribose-1-phosphate (MTR-1-P) into methylthioribulose-1-phosphate (MTRu-1-P). The chain is Methylthioribose-1-phosphate isomerase from Arthroderma otae (strain ATCC MYA-4605 / CBS 113480) (Microsporum canis).